The chain runs to 285 residues: 3-methyl-2-oxobutanoate hydroxymethyltransferase (285 aa).

The interval 1 to 22 (MSEHNVYGAAQPAQPGQPAQPR) is disordered. Low complexity predominate over residues 8-21 (GAAQPAQPGQPAQP). Mg(2+) is bound by residues D66 and D105. 3-methyl-2-oxobutanoate contacts are provided by residues 66-67 (DS), D105, and K135. E137 contributes to the Mg(2+) binding site. Catalysis depends on E203, which acts as the Proton acceptor.

It belongs to the PanB family. Homodecamer; pentamer of dimers. The cofactor is Mg(2+).

Its subcellular location is the cytoplasm. The catalysed reaction is 3-methyl-2-oxobutanoate + (6R)-5,10-methylene-5,6,7,8-tetrahydrofolate + H2O = 2-dehydropantoate + (6S)-5,6,7,8-tetrahydrofolate. It participates in cofactor biosynthesis; (R)-pantothenate biosynthesis; (R)-pantoate from 3-methyl-2-oxobutanoate: step 1/2. Catalyzes the reversible reaction in which hydroxymethyl group from 5,10-methylenetetrahydrofolate is transferred onto alpha-ketoisovalerate to form ketopantoate. The protein is 3-methyl-2-oxobutanoate hydroxymethyltransferase of Mycolicibacterium paratuberculosis (strain ATCC BAA-968 / K-10) (Mycobacterium paratuberculosis).